The sequence spans 85 residues: RNA-binding protein Hfq (85 aa).

A Sm domain is found at 9-68 (DPFLNALRRERVPVSIYLVNGIKLQGQVESFDQFVILLKNTVSQMVYKHAISTVVPARPF).

The protein belongs to the Hfq family. As to quaternary structure, homohexamer.

Functionally, RNA chaperone that binds small regulatory RNA (sRNAs) and mRNAs to facilitate mRNA translational regulation in response to envelope stress, environmental stress and changes in metabolite concentrations. Also binds with high specificity to tRNAs. The sequence is that of RNA-binding protein Hfq from Shewanella frigidimarina (strain NCIMB 400).